The sequence spans 315 residues: Putative HTH-type transcriptional regulatory protein PH1808 (315 aa).

In terms of domain architecture, HTH cro/C1-type spans 131–189 (LKALREEHGYSITELAGILGISRKSLQRYEKGESVVSLEVALRLEEVFDEPLVKPIDVL). A DNA-binding region (H-T-H motif) is located at residues 142–161 (ITELAGILGISRKSLQRYEK).

In Pyrococcus horikoshii (strain ATCC 700860 / DSM 12428 / JCM 9974 / NBRC 100139 / OT-3), this protein is Putative HTH-type transcriptional regulatory protein PH1808.